Reading from the N-terminus, the 556-residue chain is Potassium-transporting ATPase potassium-binding subunit (556 aa).

10 helical membrane passes run 6-26 (AGLI…VPLG), 65-85 (GVLA…LVQG), 133-153 (GLAV…VALV), 176-196 (LRIL…GGAI), 249-269 (PTAW…FSLP), 283-303 (YAIA…MLWF), 378-398 (GLYG…LMVG), 419-439 (YFLV…ALPG), 483-503 (ALGL…LALA), and 526-546 (FVGM…LPML).

This sequence belongs to the KdpA family. As to quaternary structure, the system is composed of three essential subunits: KdpA, KdpB and KdpC.

The protein localises to the cell membrane. Functionally, part of the high-affinity ATP-driven potassium transport (or Kdp) system, which catalyzes the hydrolysis of ATP coupled with the electrogenic transport of potassium into the cytoplasm. This subunit binds the extracellular potassium ions and delivers the ions to the membrane domain of KdpB through an intramembrane tunnel. The polypeptide is Potassium-transporting ATPase potassium-binding subunit (Mycolicibacterium paratuberculosis (strain ATCC BAA-968 / K-10) (Mycobacterium paratuberculosis)).